Here is a 444-residue protein sequence, read N- to C-terminus: Adenylosuccinate lyase (444 aa).

N(6)-(1,2-dicarboxyethyl)-AMP contacts are provided by residues 9-10, 73-75, and 97-98; these read RY, KHD, and TS. His145 functions as the Proton donor/acceptor in the catalytic mechanism. Residue Gln219 coordinates N(6)-(1,2-dicarboxyethyl)-AMP. The Proton donor/acceptor role is filled by Ser269. Residues Ser270, 275-277, Asn283, and 314-318 each bind N(6)-(1,2-dicarboxyethyl)-AMP; these read KRN and SAERI.

The protein belongs to the lyase 1 family. Adenylosuccinate lyase subfamily. Homotetramer. Residues from neighboring subunits contribute catalytic and substrate-binding residues to each active site.

It carries out the reaction N(6)-(1,2-dicarboxyethyl)-AMP = fumarate + AMP. The catalysed reaction is (2S)-2-[5-amino-1-(5-phospho-beta-D-ribosyl)imidazole-4-carboxamido]succinate = 5-amino-1-(5-phospho-beta-D-ribosyl)imidazole-4-carboxamide + fumarate. The protein operates within purine metabolism; AMP biosynthesis via de novo pathway; AMP from IMP: step 2/2. It functions in the pathway purine metabolism; IMP biosynthesis via de novo pathway; 5-amino-1-(5-phospho-D-ribosyl)imidazole-4-carboxamide from 5-amino-1-(5-phospho-D-ribosyl)imidazole-4-carboxylate: step 2/2. Functionally, catalyzes two reactions in de novo purine nucleotide biosynthesis. Catalyzes the breakdown of 5-aminoimidazole- (N-succinylocarboxamide) ribotide (SAICAR or 2-[5-amino-1-(5-phospho-beta-D-ribosyl)imidazole-4-carboxamido]succinate) to 5-aminoimidazole-4-carboxamide ribotide (AICAR or 5-amino-1-(5-phospho-beta-D-ribosyl)imidazole-4-carboxamide) and fumarate, and of adenylosuccinate (ADS or N(6)-(1,2-dicarboxyethyl)-AMP) to adenosine monophosphate (AMP) and fumarate. This chain is Adenylosuccinate lyase (purB), found in Archaeoglobus fulgidus (strain ATCC 49558 / DSM 4304 / JCM 9628 / NBRC 100126 / VC-16).